Reading from the N-terminus, the 79-residue chain is Cytochrome b (79 aa).

The next 3 helical transmembrane spans lie at 1-7 (TALFLAM), 31-52 (WLIR…YLHI), and 67-79 (WNVG…LTMM). Heme b is bound by residues H37 and H51.

It belongs to the cytochrome b family. In terms of assembly, the cytochrome bc1 complex contains 3 respiratory subunits (MT-CYB, CYC1 and UQCRFS1), 2 core proteins (UQCRC1 and UQCRC2) and probably 6 low-molecular weight proteins. Heme b is required as a cofactor.

The protein localises to the mitochondrion inner membrane. In terms of biological role, component of the ubiquinol-cytochrome c reductase complex (complex III or cytochrome b-c1 complex) that is part of the mitochondrial respiratory chain. The b-c1 complex mediates electron transfer from ubiquinol to cytochrome c. Contributes to the generation of a proton gradient across the mitochondrial membrane that is then used for ATP synthesis. The protein is Cytochrome b (mt-cyb) of Amphilophus citrinellus (Midas cichlid).